A 149-amino-acid polypeptide reads, in one-letter code: Transcriptional repressor NrdR (149 aa).

A zinc finger lies at 3-34; the sequence is CPFCSEQETKVIDSRLVAEGQQVRRRRECMVC. The ATP-cone domain maps to 49-139; that stretch reads PRVIKRDGSR…VYRSFEDIRE (91 aa).

It belongs to the NrdR family. Requires Zn(2+) as cofactor.

Negatively regulates transcription of bacterial ribonucleotide reductase nrd genes and operons by binding to NrdR-boxes. In Alteromonas mediterranea (strain DSM 17117 / CIP 110805 / LMG 28347 / Deep ecotype), this protein is Transcriptional repressor NrdR.